A 238-amino-acid polypeptide reads, in one-letter code: MAKDTTGRLRVTVKSAGRLKLSSKLWLERQLNDPYVAQAKRDGLRSRAAYKLIEIDDKYHFLKPGIAVVDLGAAPGGWSQVAAKRVGAADGRGKVVAIDLLEMPEIVGVDFAQLDFLHAEAPAKLLSMIGGKVDVVLSDMAANTTGHRKTDQLRIVGLVEDAAAFACDVLKPGGTFVAKVFQSGADATLVTQLKRDFVTVKHVKPASSRKDSSERYVLAMGFRGVPTTHDADAPMATS.

Residues Gly76, Trp78, Asp99, Asp115, and Asp139 each contribute to the S-adenosyl-L-methionine site. Lys179 functions as the Proton acceptor in the catalytic mechanism.

This sequence belongs to the class I-like SAM-binding methyltransferase superfamily. RNA methyltransferase RlmE family.

The protein resides in the cytoplasm. The catalysed reaction is uridine(2552) in 23S rRNA + S-adenosyl-L-methionine = 2'-O-methyluridine(2552) in 23S rRNA + S-adenosyl-L-homocysteine + H(+). Specifically methylates the uridine in position 2552 of 23S rRNA at the 2'-O position of the ribose in the fully assembled 50S ribosomal subunit. The protein is Ribosomal RNA large subunit methyltransferase E of Rhodopseudomonas palustris (strain BisB18).